The chain runs to 216 residues: Thiamine-phosphate synthase (216 aa).

4-amino-2-methyl-5-(diphosphooxymethyl)pyrimidine-binding positions include 37-41 and Asp-68; that span reads QVRSK. Positions 69 and 93 each coordinate Mg(2+). Thr-112 is a binding site for 4-amino-2-methyl-5-(diphosphooxymethyl)pyrimidine. 140–142 is a binding site for 2-[(2R,5Z)-2-carboxy-4-methylthiazol-5(2H)-ylidene]ethyl phosphate; it reads TPT. A 4-amino-2-methyl-5-(diphosphooxymethyl)pyrimidine-binding site is contributed by Lys-143.

This sequence belongs to the thiamine-phosphate synthase family. It depends on Mg(2+) as a cofactor.

The catalysed reaction is 2-[(2R,5Z)-2-carboxy-4-methylthiazol-5(2H)-ylidene]ethyl phosphate + 4-amino-2-methyl-5-(diphosphooxymethyl)pyrimidine + 2 H(+) = thiamine phosphate + CO2 + diphosphate. It carries out the reaction 2-(2-carboxy-4-methylthiazol-5-yl)ethyl phosphate + 4-amino-2-methyl-5-(diphosphooxymethyl)pyrimidine + 2 H(+) = thiamine phosphate + CO2 + diphosphate. The enzyme catalyses 4-methyl-5-(2-phosphooxyethyl)-thiazole + 4-amino-2-methyl-5-(diphosphooxymethyl)pyrimidine + H(+) = thiamine phosphate + diphosphate. The protein operates within cofactor biosynthesis; thiamine diphosphate biosynthesis; thiamine phosphate from 4-amino-2-methyl-5-diphosphomethylpyrimidine and 4-methyl-5-(2-phosphoethyl)-thiazole: step 1/1. Its function is as follows. Condenses 4-methyl-5-(beta-hydroxyethyl)thiazole monophosphate (THZ-P) and 2-methyl-4-amino-5-hydroxymethyl pyrimidine pyrophosphate (HMP-PP) to form thiamine monophosphate (TMP). This is Thiamine-phosphate synthase from Corynebacterium efficiens (strain DSM 44549 / YS-314 / AJ 12310 / JCM 11189 / NBRC 100395).